We begin with the raw amino-acid sequence, 492 residues long: E3 ubiquitin-protein ligase XIAP (492 aa).

3 BIR repeats span residues 40–105 (RLAS…KFIN), 172–237 (RLQT…YFVL), and 271–334 (RLET…KFLI). Residues Cys303, Cys306, His323, and Cys330 each coordinate Zn(2+). The segment at 445–480 (CKVCMDRRISIVFIPCGHLVACAVCADVLDKCPICC) adopts an RING-type zinc-finger fold.

Belongs to the IAP family. Monomer, and homodimer. Post-translationally, degraded in a 2-step mechanism; a caspase-independent first step and a caspase-dependent second step. Stabilized indirectly by MAPK, which acts to delay caspase activation, rather than directly phosphorylating xiap.

The protein localises to the cytoplasm. The catalysed reaction is S-ubiquitinyl-[E2 ubiquitin-conjugating enzyme]-L-cysteine + [acceptor protein]-L-lysine = [E2 ubiquitin-conjugating enzyme]-L-cysteine + N(6)-ubiquitinyl-[acceptor protein]-L-lysine.. In terms of biological role, multi-functional protein which regulates not only caspases and apoptosis, but also acts as an E3 ubiquitin-protein ligase mediating ubiquitination and subsequent proteasomal degradation of its target proteins. Acts as a direct caspase inhibitor. E3 ubiquitin-protein ligase that acts as an important regulator of innate immunity by mediating 'Lys-63'-linked polyubiquitination of ripk2 downstream of NOD1 and NOD2, thereby transforming ripk2 into a scaffolding protein for downstream effectors, ultimately leading to activation of the NF-kappa-B and MAP kinases signaling. A key apoptotic suppressor in eggs. Acts as a positive regulator of Wnt signaling. The sequence is that of E3 ubiquitin-protein ligase XIAP (xiap) from Xenopus tropicalis (Western clawed frog).